The following is a 380-amino-acid chain: Cytochrome b (380 aa).

The next 4 helical transmembrane spans lie at Phe33–Met53, Trp77–Val98, Trp113–Leu133, and Phe178–Leu198. Residues His83 and His97 each contribute to the heme b site. Residues His182 and His196 each coordinate heme b. His201 contributes to the a ubiquinone binding site. The next 4 helical transmembrane spans lie at Tyr226–Ser246, Leu288–His308, Pro320–Gly340, and Phe347–Pro367.

This sequence belongs to the cytochrome b family. As to quaternary structure, the cytochrome bc1 complex contains 3 respiratory subunits (MT-CYB, CYC1 and UQCRFS1), 2 core proteins (UQCRC1 and UQCRC2) and probably 6 low-molecular weight proteins. Requires heme b as cofactor.

Its subcellular location is the mitochondrion inner membrane. In terms of biological role, component of the ubiquinol-cytochrome c reductase complex (complex III or cytochrome b-c1 complex) that is part of the mitochondrial respiratory chain. The b-c1 complex mediates electron transfer from ubiquinol to cytochrome c. Contributes to the generation of a proton gradient across the mitochondrial membrane that is then used for ATP synthesis. This chain is Cytochrome b (mt-cyb), found in Acipenser sinensis (Chinese sturgeon).